The following is a 274-amino-acid chain: Diaminopimelate epimerase (274 aa).

Substrate is bound by residues asparagine 11, glutamine 44, and asparagine 64. The active-site Proton donor is the cysteine 73. Substrate-binding positions include 74–75, asparagine 157, asparagine 190, and 208–209; these read GN and ER. The Proton acceptor role is filled by cysteine 217. 218 to 219 contributes to the substrate binding site; the sequence is GS.

This sequence belongs to the diaminopimelate epimerase family. In terms of assembly, homodimer.

The protein localises to the cytoplasm. The catalysed reaction is (2S,6S)-2,6-diaminopimelate = meso-2,6-diaminopimelate. It participates in amino-acid biosynthesis; L-lysine biosynthesis via DAP pathway; DL-2,6-diaminopimelate from LL-2,6-diaminopimelate: step 1/1. In terms of biological role, catalyzes the stereoinversion of LL-2,6-diaminopimelate (L,L-DAP) to meso-diaminopimelate (meso-DAP), a precursor of L-lysine and an essential component of the bacterial peptidoglycan. This chain is Diaminopimelate epimerase, found in Escherichia coli O81 (strain ED1a).